Here is a 598-residue protein sequence, read N- to C-terminus: Fibulin-1 (598 aa).

Cystine bridges form between Ala1-Cys25, Cys7-Cys26, Cys28-Cys52, Cys29-Cys59, Cys42-Cys60, Cys96-Cys106, Cys102-Cys115, Cys117-Cys130, Cys136-Cys149, Cys143-Cys158, Cys164-Cys176, Cys182-Cys195, Cys189-Cys204, Cys210-Cys222, Cys228-Cys242, Cys257-Cys270, Cys275-Cys288, Cys282-Cys297, Cys299-Cys312, Cys318-Cys330, Cys326-Cys339, Cys341-Cys354, Cys360-Cys369, Cys365-Cys378, Cys380-Cys394, Cys400-Cys413, Cys409-Cys422, Cys424-Cys438, Cys444-Cys457, Cys451-Cys466, and Cys471-Cys483. Anaphylatoxin-like domains are found at residues 1 to 27 (ANEQ…RCCH) and 28 to 60 (CCLL…RACC). The N-linked (GlcNAc...) asparagine glycan is linked to Asn14. The region spanning 92-131 (LNDRCRGGGPCKQQCRDTGDEVVCSCFVGYQLLSDGVSCE) is the EGF-like 1 domain. Residues 132–177 (DVNECITGSHSCRLGESCINTVGSFRCQRDSSCGTGYELTEDNSCK) enclose the EGF-like 2; calcium-binding domain. The 46-residue stretch at 178 to 223 (DIDQCESGIHNCLPDFICQNTLGSFRCRPKLQCKNGFIQDALANCI) folds into the EGF-like 3; calcium-binding domain. The EGF-like 4; calcium-binding domain occupies 224–270 (DINECLSIVSAPCPTGHTCINTEGSYTQKNVPNCGRGYHLNEEGTRC). Residues 271 to 313 (DVNECAPPAEPCGKGHRCVNSPGSFRCECKTGYYFDGISRMCV) form the EGF-like 5; calcium-binding domain. Positions 271–355 (DVNECAPPAE…RLSVDGRSCE (85 aa)) are self-association and FN1-binding. An EGF-like 6; calcium-binding domain is found at 314–355 (DVNECQRYPGRLCGHKCENTLGSYVCSCSVGFRLSVDGRSCE). The 40-residue stretch at 356–395 (DINECSSSPCSQECANVYGSYQCYCRRGYQLSDVDGVTCE) folds into the EGF-like 7; calcium-binding domain. An EGF-like 8; calcium-binding domain is found at 396–439 (DIDECALPTGGHICSYRCINIPGSFQCSCPASGYRLAPNGRNCQ). Residues 440-484 (DIDECVTGIHNCSINETCFNIQGGFRCLAFECPENYRRSAATRCE) form the EGF-like 9; calcium-binding domain. Asn450 and Asn454 each carry an N-linked (GlcNAc...) asparagine glycan.

Belongs to the fibulin family. As to quaternary structure, homomultimerizes and interacts with various extracellular matrix components. Interacts with FBLN7. Interacts with the mature/soluble form of DTR. Interacts with CCN3.

It localises to the secreted. The protein resides in the extracellular space. It is found in the extracellular matrix. Incorporated into fibronectin-containing matrix fibers. May play a role in cell adhesion and migration along protein fibers within the extracellular matrix (ECM). Could be important for certain developmental processes and contribute to the supramolecular organization of ECM architecture, in particular to those of basement membranes. May serve to anchor the mature/soluble form of DTR to its fibers as it migrates through the extracellular matrix. The direct physical association with DTR may be useful in such tissue developmental processes as wound healing. The chain is Fibulin-1 (FBLN1) from Chlorocebus aethiops (Green monkey).